The following is a 714-amino-acid chain: Penicillin-binding protein 1F (714 aa).

Topologically, residues 1-12 (MFKIKKKKLFIP) are cytoplasmic. A helical; Signal-anchor for type II membrane protein membrane pass occupies residues 13-33 (IIILVLTAFLALIGYISIIFL). Residues 34–714 (GHYVIDEKKL…DYVQPKLFSS (681 aa)) lie on the Extracellular side of the membrane. The tract at residues 49 to 217 (SKIVDQNGDE…STYSPILHPD (169 aa)) is transglycosylase. Residue Glu-87 is the Proton donor; for transglycosylase activity of the active site. The segment at 297-592 (SKLQKTAYQV…SSYPTRLFKD (296 aa)) is transpeptidase. The active-site Acyl-ester intermediate; for transpeptidase activity is Ser-359.

The protein in the N-terminal section; belongs to the glycosyltransferase 51 family. It in the C-terminal section; belongs to the transpeptidase family.

It localises to the cell membrane. The enzyme catalyses [GlcNAc-(1-&gt;4)-Mur2Ac(oyl-L-Ala-gamma-D-Glu-L-Lys-D-Ala-D-Ala)](n)-di-trans,octa-cis-undecaprenyl diphosphate + beta-D-GlcNAc-(1-&gt;4)-Mur2Ac(oyl-L-Ala-gamma-D-Glu-L-Lys-D-Ala-D-Ala)-di-trans,octa-cis-undecaprenyl diphosphate = [GlcNAc-(1-&gt;4)-Mur2Ac(oyl-L-Ala-gamma-D-Glu-L-Lys-D-Ala-D-Ala)](n+1)-di-trans,octa-cis-undecaprenyl diphosphate + di-trans,octa-cis-undecaprenyl diphosphate + H(+). It carries out the reaction Preferential cleavage: (Ac)2-L-Lys-D-Ala-|-D-Ala. Also transpeptidation of peptidyl-alanyl moieties that are N-acyl substituents of D-alanine.. Its pathway is cell wall biogenesis; peptidoglycan biosynthesis. Functionally, cell wall formation. May be involved in outgrowth of the germinated spore or it could function in the synthesis of the germ cell wall. The sequence is that of Penicillin-binding protein 1F (pbpF) from Bacillus subtilis (strain 168).